The following is a 197-amino-acid chain: uncharacterized protein (197 aa).

This is an uncharacterized protein from Bacillus subtilis (strain 168).